Here is an 810-residue protein sequence, read N- to C-terminus: Transitional endoplasmic reticulum ATPase homolog 2 (810 aa).

ATP contacts are provided by residues 252–258 (PGTGKTL), N353, H389, and 526–531 (GCGKTL). Residues 713–727 (RQEKERQDRSARGEE) are compositionally biased toward basic and acidic residues. 2 disordered regions span residues 713 to 732 (RQEKERQDRSARGEELMEDE) and 777 to 810 (FGNNFKFPGEAPSAGQPVGGNGGSGGNDDDDLYN). Residues 793 to 802 (PVGGNGGSGG) show a composition bias toward gly residues. The segment at 805 to 810 (DDDLYN) is interaction with ufd-2.

This sequence belongs to the AAA ATPase family. CDC48 subfamily. As to quaternary structure, homohexamer; oligomerization is ATP-independent. Forms a ring-shaped particle of 18.3 nm diameter, that displays 6-fold radial symmetry. Interacts with cdc-48.1 and thus may form heterohexamers. Forms a complex composed of ubxn-3, cdc-48.1 and/or cdc-48.2 and substrate cdt-1. Interacts (via N-terminus) with ubxn-3. Interacts (via N-terminus) with atx-3 (via RRDR motif). Interacts (via N-terminus) with ubxn-5. Interacts with ufd-1. Interacts (via DDDLYN motif) with ufd-2. Interacts (via N-terminus) with ubxn-1. Interacts (via N-terminus) with ubxn-2. Interacts (via N-terminus) with ubxn-4. Interacts with ubxn-6. As to expression, expressed in body wall muscles.

The protein resides in the cytoplasm. It catalyses the reaction ATP + H2O = ADP + phosphate + H(+). With respect to regulation, the first ATP-binding region has low ATPase activity. The second ATP-binding region is responsible for ATPase activity. ATP binding to the first ATP-binding region induces intrinsic activity of the second ATP-binding region. While ATP binding to the first ATP-binding region appears to prevent ATP hydrolysis by the second ATP-binding region, ADP-binding to first region promotes the coordinate and cooperative ATPase cycle of the second ATP-binding region. ATP binding to the first ATP-binding region induces a conformational change, promoting the rotation of the first ATP-binding region relative to the second ATP-binding region in the hexamer. Inhibited by N-ethylmaleimide (NEM). In terms of biological role, ATP-dependent chaperone which probably uses the energy provided by ATP hydrolysis to generate mechanical force to unfold substrate proteins, disassemble protein complexes, and disaggregate protein aggregates. However, able to prevent aggregation of unfolded proteins also in an ATP-independent manner. Targets polyubiquitinated proteins for proteasomal degradation by binding to 'Lys-48'-linked polyubiquitin chains. Involved in the cytoplasmic elimination of misfolded proteins exported from the ER. This pathway, known as ERAD, prevents the activation of the unfolded protein response (UPR) caused by the accumulation of misfolded proteins in the ER. Together with udf-2 and chn-1, regulates myosin assembly in body wall muscles by targeting myosin chaperone unc-45 for proteasomal degradation. During oocyte meiosis and together with cdc-48.1, required for chromosome condensation at the diakinesis phase in prophase I and for progression of metaphase I. During the first embryonic cell division, regulates DNA replication and thus chromosome segregation and decondensation, and nuclear envelope re-assembly. In S phase and in association with ufd-1, npl-4.1 and/or npl-4.2 and ubxn-3, ensures the degradation of DNA licensing factor cdt-1 after the initiation of DNA replication and thus the disassembly of the DNA replication CMG helicase complex by promoting the dissociation from chromatin of several of its components including cdc-45 and sld-5. Regulates ubxn-3 nuclear localization during S phase. During the first embryonic cell divisions and together with cdc-48.1, regulates the re-assembly of the nuclear envelope after mitosis possibly by inactivating kinase air-2, a component of the chromosomal passenger complex (CPC). This is Transitional endoplasmic reticulum ATPase homolog 2 (cdc-48.2) from Caenorhabditis elegans.